Here is a 1158-residue protein sequence, read N- to C-terminus: Voltage-gated inwardly rectifying potassium channel KCNH2 (1158 aa).

At 1–402 (MPVRRGHVAP…RIHRWTILHY (402 aa)) the chain is on the cytoplasmic side. A PAS domain is found at 17 to 88 (TIIRKFEGQS…AAQIAQALLG (72 aa)). The PAC domain occupies 92–144 (RKVEIAFYRKDGSCFLCLVDVVPVKNEDGAVIMFILNFEVVMEKDMVGSPTHD). Residues 232–314 (RALVGSSSPP…GAMHPLRGGL (83 aa)) are disordered. Ser239 is subject to Phosphoserine. Residues 258 to 269 (PDASGSSCSLAR) are compositionally biased toward polar residues. Phosphoserine is present on residues Ser283, Ser284, Ser319, and Ser350. A helical membrane pass occupies residues 403-423 (SPFKAVWDWLILLLVIYTAVF). At 424 to 449 (TPYSAAFLLKETEEGPPAPDCGYACQ) the chain is on the extracellular side. A helical membrane pass occupies residues 450 to 470 (PLAVVDFIVDIMFIVDILINF). The Cytoplasmic portion of the chain corresponds to 471 to 494 (RTTYVNANEEVVSHPGRIAVHYFK). Residues 495–515 (GWFLIDMVAAIPFDLLIFGSG) traverse the membrane as a helical segment. Residues 516–519 (SEEL) are Extracellular-facing. A helical; Voltage-sensor membrane pass occupies residues 520-540 (IGLLKTARLLRLVRVARKLDR). Over 541 to 546 (YSEYGA) the chain is Cytoplasmic. A helical transmembrane segment spans residues 547–567 (AVLFLLMCTFALIAHWLACIW). Residues 568 to 610 (YAIGNMEQPHMDSRIGWLHNLGDQIGKPYNSSGLGGPSIKDKY) are Extracellular-facing. Asn597 carries N-linked (GlcNAc...) asparagine glycosylation. Residues 611–631 (VTALYFTFSSLTSVGFGNVSP) constitute an intramembrane region (pore-forming). The short motif at 623-628 (SVGFGN) is the Selectivity filter element. Residues 632–637 (NTNSEK) lie on the Extracellular side of the membrane. The chain crosses the membrane as a helical span at residues 638–658 (IFSICVMLIGSLMYASIFGNV). Residues 659–1158 (SAIIQRLYSG…LHRHGSDPGS (500 aa)) lie on the Cytoplasmic side of the membrane. The cNMP-binding domain stretch occupies residues 741–841 (PFRGATKGCL…IHRDDLLEVL (101 aa)). A disordered region spans residues 869-987 (GSPGSAELEG…KSSDTCNPLS (119 aa)). Phosphoserine occurs at positions 870 and 873. Residues 882–891 (RQRKRKLSFR) show a composition bias toward basic residues. The span at 910-926 (GRAGAGPSGRGRPGGPW) shows a compositional bias: gly residues. Over residues 927 to 938 (GESPSSGPSSPE) the composition is skewed to low complexity. Pro residues predominate over residues 959 to 969 (SPRPPGEPPGG). Omega-N-methylarginine is present on Arg1013. Residues 1034–1061 (RGDVEGRLDALQRQLNRLETRLSADMAT) are a coiled coil. Residues 1116-1158 (FEELPPGAPELPQDGPPRRLSLPGQLGALTSQPLHRHGSDPGS) form a disordered region. Residue Ser1136 is modified to Phosphoserine.

The protein belongs to the potassium channel family. H (Eag) (TC 1.A.1.20) subfamily. Kv11.1/KCNH2 sub-subfamily. As to quaternary structure, the potassium channel is probably composed of a homo- or heterotetrameric complex of pore-forming alpha subunits that can associate with modulating beta subunits. Interacts with DNAJB12 and DNAJB14; chaperones DNAJB12 and DNAJB14 promote tetramerization. Heteromultimer with KCNH6/ERG2 and KCNH7/ERG3. Interacts with ALG10B. Forms a stable complex with KCNE1 or KCNE2, and that this heteromultimerization regulates Inward rectifier potassium channel activity. Interacts with CANX. The core-glycosylated, but not the fully glycosylated form interacts with RNF207. Interacts with NDFIP1 and NDFIP2; this interaction decreases the cell membrane expression by targeting KCNH2, through interaction with NEDD4L, for the degradation through the multivesicular bodies (MVBs)-lysosomal pathway. Phosphorylated on serine and threonine residues. Phosphorylation by PKA inhibits ion conduction. In terms of tissue distribution, highly expressed in left and right atria of the heart, in cortex and hippocampus; detected at intermediate levels in left and right ventricle, Purkinje fibers, cerebellum, thalamus and basal ganglia; detected at low levels in liver, spleen and kidney.

The protein localises to the cell membrane. It catalyses the reaction K(+)(in) = K(+)(out). Functionally, pore-forming (alpha) subunit of voltage-gated inwardly rectifying potassium channel. Characterized by unusual gating kinetics by producing relatively small outward currents during membrane depolarization and large inward currents during subsequent repolarization which reflect a rapid inactivation during depolarization and quick recovery from inactivation but slow deactivation (closing) during repolarization. Channel properties are modulated by cAMP and subunit assembly. Forms a stable complex with KCNE1 or KCNE2, and that this heteromultimerization regulates inward rectifier potassium channel activity. The protein is Voltage-gated inwardly rectifying potassium channel KCNH2 of Canis lupus familiaris (Dog).